Consider the following 238-residue polypeptide: Probable transcriptional regulatory protein CT_457 (238 aa).

Residues 1–21 (MAGHSKWANTKHRKERADHKK) are disordered. Residues 9-21 (NTKHRKERADHKK) show a composition bias toward basic residues.

It belongs to the TACO1 family.

The protein resides in the cytoplasm. The protein is Probable transcriptional regulatory protein CT_457 of Chlamydia trachomatis serovar D (strain ATCC VR-885 / DSM 19411 / UW-3/Cx).